Here is a 396-residue protein sequence, read N- to C-terminus: Acetate kinase (396 aa).

Residue Asn8 participates in Mg(2+) binding. Lys15 contacts ATP. Arg89 contributes to the substrate binding site. Catalysis depends on Asp146, which acts as the Proton donor/acceptor. ATP-binding positions include 206-210, 283-285, and 331-335; these read HIGNG, DMR, and GIGEN. Glu383 is a Mg(2+) binding site.

Belongs to the acetokinase family. As to quaternary structure, homodimer. Mg(2+) serves as cofactor. The cofactor is Mn(2+).

The protein localises to the cytoplasm. It catalyses the reaction acetate + ATP = acetyl phosphate + ADP. Its pathway is metabolic intermediate biosynthesis; acetyl-CoA biosynthesis; acetyl-CoA from acetate: step 1/2. Functionally, catalyzes the formation of acetyl phosphate from acetate and ATP. Can also catalyze the reverse reaction. The protein is Acetate kinase of Streptococcus gordonii (strain Challis / ATCC 35105 / BCRC 15272 / CH1 / DL1 / V288).